Here is a 111-residue protein sequence, read N- to C-terminus: Putative carnobacteriocin-B2 immunity protein (111 aa).

Functionally, could impart immunity to carnobacteriocin-B2 to naturally sensitive host strains. The chain is Putative carnobacteriocin-B2 immunity protein from Carnobacterium maltaromaticum (Carnobacterium piscicola).